The primary structure comprises 431 residues: tRNA(Ile)-lysidine synthase (431 aa).

20–25 (SGGLDS) contributes to the ATP binding site.

This sequence belongs to the tRNA(Ile)-lysidine synthase family.

Its subcellular location is the cytoplasm. The enzyme catalyses cytidine(34) in tRNA(Ile2) + L-lysine + ATP = lysidine(34) in tRNA(Ile2) + AMP + diphosphate + H(+). Ligates lysine onto the cytidine present at position 34 of the AUA codon-specific tRNA(Ile) that contains the anticodon CAU, in an ATP-dependent manner. Cytidine is converted to lysidine, thus changing the amino acid specificity of the tRNA from methionine to isoleucine. The chain is tRNA(Ile)-lysidine synthase from Escherichia coli O157:H7.